A 289-amino-acid chain; its full sequence is Purine nucleoside phosphorylase (289 aa).

M1 is modified (N-acetylmethionine). Residues S33, H64, and 84 to 86 (RFH) contribute to the phosphate site. Y88 serves as a coordination point for a purine D-ribonucleoside. A116 is a phosphate binding site. 2 residues coordinate a purine D-ribonucleoside: E201 and M219. A phosphate-binding site is contributed by S220. A purine D-ribonucleoside is bound at residue N243. Phosphoserine is present on S251. H257 is a binding site for a purine D-ribonucleoside.

The protein belongs to the PNP/MTAP phosphorylase family. As to quaternary structure, homotrimer.

The protein resides in the cytoplasm. The enzyme catalyses inosine + phosphate = alpha-D-ribose 1-phosphate + hypoxanthine. The catalysed reaction is guanosine + phosphate = alpha-D-ribose 1-phosphate + guanine. It carries out the reaction 2'-deoxyguanosine + phosphate = 2-deoxy-alpha-D-ribose 1-phosphate + guanine. It catalyses the reaction 2'-deoxyinosine + phosphate = 2-deoxy-alpha-D-ribose 1-phosphate + hypoxanthine. It functions in the pathway purine metabolism; purine nucleoside salvage. Its function is as follows. Catalyzes the phosphorolytic breakdown of the N-glycosidic bond in the beta-(deoxy)ribonucleoside molecules, with the formation of the corresponding free purine bases and pentose-1-phosphate. Preferentially acts on 6-oxopurine nucleosides including inosine and guanosine. The sequence is that of Purine nucleoside phosphorylase (PNP) from Bos taurus (Bovine).